A 368-amino-acid polypeptide reads, in one-letter code: Heme A synthase (368 aa).

Helical transmembrane passes span 14 to 34, 104 to 124, 129 to 149, 161 to 181, and 200 to 220; these read AVRIWLTLVAALIAVMVLVGG, VIGIVYLLPFLWFLWRGAIGP, ALWIIFALGALQGAVGWWMVA, VRLATHLSLALIIYAAIVWTL, and ALALLGLTFVQLYAGALVAGL. Residue H264 participates in heme binding. A run of 3 helical transmembrane segments spans residues 266 to 283, 296 to 316, and 318 to 338; these read MLAYALWTLAALHMIDAL, FLALTAQATLGIFTVLYAAPI, and LALVHQAMALVVLTLAVLQAE. H322 is a heme binding site.

It belongs to the COX15/CtaA family. Type 2 subfamily. In terms of assembly, interacts with CtaB. Requires heme b as cofactor.

It localises to the cell membrane. The enzyme catalyses Fe(II)-heme o + 2 A + H2O = Fe(II)-heme a + 2 AH2. It functions in the pathway porphyrin-containing compound metabolism; heme A biosynthesis; heme A from heme O: step 1/1. Its function is as follows. Catalyzes the conversion of heme O to heme A by two successive hydroxylations of the methyl group at C8. The first hydroxylation forms heme I, the second hydroxylation results in an unstable dihydroxymethyl group, which spontaneously dehydrates, resulting in the formyl group of heme A. The chain is Heme A synthase from Rhodopseudomonas palustris (strain ATCC BAA-98 / CGA009).